The primary structure comprises 90 residues: uncharacterized protein (90 aa).

A helical membrane pass occupies residues 46–62; it reads MALLVVFLVSLFACTTI.

The protein resides in the membrane. This is an uncharacterized protein from Haemophilus influenzae (strain ATCC 51907 / DSM 11121 / KW20 / Rd).